Here is a 179-residue protein sequence, read N- to C-terminus: FAD-dependent monooxygenase nscC (179 aa).

Residues Met-1–Ser-21 form the signal peptide. Residues Glu-35 and Ala-46 each coordinate FAD. Asn-92 carries an N-linked (GlcNAc...) asparagine glycan. An FAD-binding site is contributed by Arg-119. Residue Asn-170 is glycosylated (N-linked (GlcNAc...) asparagine).

This sequence belongs to the paxM FAD-dependent monooxygenase family. FAD serves as cofactor.

It participates in secondary metabolite biosynthesis. In terms of biological role, FAD-dependent monooxygenase; part of the gene cluster that mediates the biosynthesis of neosartoricin B, a prenylated anthracenone that probably exhibits T-cell antiproliferative activity, suggestive of a physiological role as an immunosuppressive agent. The non-reducing polyketide synthase nscA probably synthesizes and cyclizes the decaketide backbone. The hydrolase nscB then mediates the product release through hydrolysis followed by spontaneous decarboxylation. The prenyltransferase nscD catalyzes the addition of the dimethylallyl group to the aromatic C5. The FAD-dependent monooxygenase nscC is then responsible for the stereospecific hydroxylation at C2. Neosartoricin B can be converted into two additional compounds neosartoricins C and D. Neosartoricin C is a spirocyclic compound that is cyclized through the attack of C3 hydroxyl on C14, followed by dehydration. On the other hand, neosartoricin D is a further cyclized compound in which attack of C2 on C14 in neosartoricin C results in the formation of the acetal-containing dioxabicyclo-octanone ring. Both of these compounds are novel and possibly represent related metabolites of the gene cluster. In Trichophyton equinum (strain ATCC MYA-4606 / CBS 127.97) (Horse ringworm fungus), this protein is FAD-dependent monooxygenase nscC.